Consider the following 464-residue polypeptide: Propanal dehydrogenase (CoA-propanoylating) (464 aa).

Residues 1–18 are targets protein to the BMC; the sequence is MNTSELETLIRTILSEQL.

The protein belongs to the EutE/PduP family. As to quaternary structure, interacts with BMC shell proteins PduA and PduJ, which target this protein to BMC. Interacts with PduQ, probably via the N-terminus of PduQ. Interacts with PduK, probably with its BMC-containing N-terminus.

It localises to the bacterial microcompartment. It carries out the reaction propanal + NAD(+) + CoA = propanoyl-CoA + NADH + H(+). It participates in polyol metabolism; 1,2-propanediol degradation. Its function is as follows. A CoA-acylating aldehyde dehydrogenase required for optimal 1,2-propanediol (1,2-PD) degradation. Optimizes growth in the bacterial microcompartment (BMC) dedicated to 1,2-PD degradation by minimizing propionaldehyde toxicity. Directly targeted to the BMC. NAD(+) and NADH are regenerated internally within the Pdu BMC by the PduP and PduQ enzymes, which reduce NAD(+) and oxidize NADH respectively, although there must also be cofactor transport across the BMC. In terms of biological role, the 1,2-PD-specific bacterial microcompartment (BMC) concentrates low levels of 1,2-PD catabolic enzymes, concentrates volatile reaction intermediates thus enhancing pathway flux and keeps the level of toxic, mutagenic propionaldehyde low. The polypeptide is Propanal dehydrogenase (CoA-propanoylating) (Salmonella typhimurium (strain LT2 / SGSC1412 / ATCC 700720)).